Here is a 156-residue protein sequence, read N- to C-terminus: Crossover junction endodeoxyribonuclease RuvC (156 aa).

Catalysis depends on residues Asp7, Glu67, and Asp140. Mg(2+) is bound by residues Asp7, Glu67, and Asp140.

This sequence belongs to the RuvC family. Homodimer which binds Holliday junction (HJ) DNA. The HJ becomes 2-fold symmetrical on binding to RuvC with unstacked arms; it has a different conformation from HJ DNA in complex with RuvA. In the full resolvosome a probable DNA-RuvA(4)-RuvB(12)-RuvC(2) complex forms which resolves the HJ. Mg(2+) serves as cofactor.

It localises to the cytoplasm. It catalyses the reaction Endonucleolytic cleavage at a junction such as a reciprocal single-stranded crossover between two homologous DNA duplexes (Holliday junction).. The RuvA-RuvB-RuvC complex processes Holliday junction (HJ) DNA during genetic recombination and DNA repair. Endonuclease that resolves HJ intermediates. Cleaves cruciform DNA by making single-stranded nicks across the HJ at symmetrical positions within the homologous arms, yielding a 5'-phosphate and a 3'-hydroxyl group; requires a central core of homology in the junction. The consensus cleavage sequence is 5'-(A/T)TT(C/G)-3'. Cleavage occurs on the 3'-side of the TT dinucleotide at the point of strand exchange. HJ branch migration catalyzed by RuvA-RuvB allows RuvC to scan DNA until it finds its consensus sequence, where it cleaves and resolves the cruciform DNA. The chain is Crossover junction endodeoxyribonuclease RuvC from Rickettsia felis (strain ATCC VR-1525 / URRWXCal2) (Rickettsia azadi).